The chain runs to 335 residues: Beta-hexosaminidase (335 aa).

Residues D60, R68, R133, and 163–164 each bind substrate; that span reads KH. H176 acts as the Proton donor/acceptor in catalysis. The active-site Nucleophile is D247.

Belongs to the glycosyl hydrolase 3 family. NagZ subfamily. As to quaternary structure, monomer.

Its subcellular location is the cytoplasm. It catalyses the reaction Hydrolysis of terminal non-reducing N-acetyl-D-hexosamine residues in N-acetyl-beta-D-hexosaminides.. It participates in cell wall biogenesis; peptidoglycan recycling. Its function is as follows. Plays a role in peptidoglycan recycling by cleaving the terminal beta-1,4-linked N-acetylglucosamine (GlcNAc) from peptide-linked peptidoglycan fragments, giving rise to free GlcNAc, anhydro-N-acetylmuramic acid and anhydro-N-acetylmuramic acid-linked peptides. The polypeptide is Beta-hexosaminidase (Xylella fastidiosa (strain 9a5c)).